Reading from the N-terminus, the 341-residue chain is Anthranilate phosphoribosyltransferase (341 aa).

Residues Gly83, Ser91, 93-96 (NTST), 111-115 (KHGNR), and Ser123 contribute to the 5-phospho-alpha-D-ribose 1-diphosphate site. Gly83 provides a ligand contact to anthranilate. Residue Ser95 coordinates Mg(2+). Asn114 contributes to the anthranilate binding site. Residue Arg169 participates in anthranilate binding. Positions 228 and 229 each coordinate Mg(2+).

The protein belongs to the anthranilate phosphoribosyltransferase family. As to quaternary structure, homodimer. It depends on Mg(2+) as a cofactor.

The catalysed reaction is N-(5-phospho-beta-D-ribosyl)anthranilate + diphosphate = 5-phospho-alpha-D-ribose 1-diphosphate + anthranilate. Its pathway is amino-acid biosynthesis; L-tryptophan biosynthesis; L-tryptophan from chorismate: step 2/5. In terms of biological role, catalyzes the transfer of the phosphoribosyl group of 5-phosphorylribose-1-pyrophosphate (PRPP) to anthranilate to yield N-(5'-phosphoribosyl)-anthranilate (PRA). This Hyphomonas neptunium (strain ATCC 15444) protein is Anthranilate phosphoribosyltransferase.